The following is a 396-amino-acid chain: 1-deoxy-D-xylulose 5-phosphate reductoisomerase (396 aa).

Threonine 13, glycine 14, serine 15, isoleucine 16, and asparagine 127 together coordinate NADPH. Lysine 128 provides a ligand contact to 1-deoxy-D-xylulose 5-phosphate. Glutamate 129 contributes to the NADPH binding site. A Mn(2+)-binding site is contributed by aspartate 153. The 1-deoxy-D-xylulose 5-phosphate site is built by serine 154, glutamate 155, serine 184, and histidine 207. Glutamate 155 lines the Mn(2+) pocket. Glycine 213 contacts NADPH. Serine 220, asparagine 225, lysine 226, and glutamate 229 together coordinate 1-deoxy-D-xylulose 5-phosphate. A Mn(2+)-binding site is contributed by glutamate 229.

This sequence belongs to the DXR family. Mg(2+) is required as a cofactor. The cofactor is Mn(2+).

It catalyses the reaction 2-C-methyl-D-erythritol 4-phosphate + NADP(+) = 1-deoxy-D-xylulose 5-phosphate + NADPH + H(+). Its pathway is isoprenoid biosynthesis; isopentenyl diphosphate biosynthesis via DXP pathway; isopentenyl diphosphate from 1-deoxy-D-xylulose 5-phosphate: step 1/6. Its function is as follows. Catalyzes the NADPH-dependent rearrangement and reduction of 1-deoxy-D-xylulose-5-phosphate (DXP) to 2-C-methyl-D-erythritol 4-phosphate (MEP). The polypeptide is 1-deoxy-D-xylulose 5-phosphate reductoisomerase (Pseudomonas fluorescens (strain ATCC BAA-477 / NRRL B-23932 / Pf-5)).